Reading from the N-terminus, the 195-residue chain is Imidazoleglycerol-phosphate dehydratase (195 aa).

It belongs to the imidazoleglycerol-phosphate dehydratase family.

The protein localises to the cytoplasm. The enzyme catalyses D-erythro-1-(imidazol-4-yl)glycerol 3-phosphate = 3-(imidazol-4-yl)-2-oxopropyl phosphate + H2O. It functions in the pathway amino-acid biosynthesis; L-histidine biosynthesis; L-histidine from 5-phospho-alpha-D-ribose 1-diphosphate: step 6/9. This chain is Imidazoleglycerol-phosphate dehydratase, found in Polynucleobacter necessarius subsp. necessarius (strain STIR1).